Consider the following 1391-residue polypeptide: DNA-directed RNA polymerase subunit beta' (1391 aa).

Positions 72, 74, 87, and 90 each coordinate Zn(2+). Residues aspartate 462, aspartate 464, and aspartate 466 each contribute to the Mg(2+) site. The Zn(2+) site is built by cysteine 816, cysteine 890, cysteine 897, and cysteine 900.

It belongs to the RNA polymerase beta' chain family. As to quaternary structure, the RNAP catalytic core consists of 2 alpha, 1 beta, 1 beta' and 1 omega subunit. When a sigma factor is associated with the core the holoenzyme is formed, which can initiate transcription. Requires Mg(2+) as cofactor. The cofactor is Zn(2+).

It catalyses the reaction RNA(n) + a ribonucleoside 5'-triphosphate = RNA(n+1) + diphosphate. In terms of biological role, DNA-dependent RNA polymerase catalyzes the transcription of DNA into RNA using the four ribonucleoside triphosphates as substrates. The polypeptide is DNA-directed RNA polymerase subunit beta' (Neisseria meningitidis serogroup C (strain 053442)).